Reading from the N-terminus, the 466-residue chain is 3-isopropylmalate dehydratase large subunit (466 aa).

The [4Fe-4S] cluster site is built by Cys-347, Cys-407, and Cys-410.

This sequence belongs to the aconitase/IPM isomerase family. LeuC type 1 subfamily. In terms of assembly, heterodimer of LeuC and LeuD. It depends on [4Fe-4S] cluster as a cofactor.

The catalysed reaction is (2R,3S)-3-isopropylmalate = (2S)-2-isopropylmalate. Its pathway is amino-acid biosynthesis; L-leucine biosynthesis; L-leucine from 3-methyl-2-oxobutanoate: step 2/4. Its function is as follows. Catalyzes the isomerization between 2-isopropylmalate and 3-isopropylmalate, via the formation of 2-isopropylmaleate. The sequence is that of 3-isopropylmalate dehydratase large subunit from Vibrio campbellii (strain ATCC BAA-1116).